The following is a 454-amino-acid chain: uncharacterized protein (454 aa).

A TRAM domain is found at 1-45 (MAAEGKAIAKVNDLVIFVPYVVPGDVVDLQIKRKKNKYAEAEAVK). [4Fe-4S] cluster is bound by residues C58, C64, C67, and C160. S-adenosyl-L-methionine contacts are provided by Q286, Y315, E336, and D385. The Nucleophile role is filled by C412.

This sequence belongs to the class I-like SAM-binding methyltransferase superfamily. RNA M5U methyltransferase family.

This is an uncharacterized protein from Bacteroides thetaiotaomicron (strain ATCC 29148 / DSM 2079 / JCM 5827 / CCUG 10774 / NCTC 10582 / VPI-5482 / E50).